The primary structure comprises 96 residues: Small ribosomal subunit protein bS6 (96 aa).

The protein belongs to the bacterial ribosomal protein bS6 family.

Binds together with bS18 to 16S ribosomal RNA. The sequence is that of Small ribosomal subunit protein bS6 (rpsF) from Mycobacterium leprae (strain TN).